Here is a 339-residue protein sequence, read N- to C-terminus: MLFLQLPLLLVLLPGGDSEEGFQEPISFQIIWISSFYNRSWEEEVCSAWLGELQTHRREGKSDIVIYRQPWSKGNFSREDLMESEHILRMFFVRFVQAFFNHASQWKLEYPFDVQIAGGCDLYHGETSVGFVRIAYQGSDFASFQNNSWLPSPKGGTRAQLVCKLFNLYQGTLEIIHKLLSDTCPRFVLGLLDAGKADLQRQVRPEAWLSSGPNPSPGHLMLVCHVSGFYPKPIWVMWMRDEQEQPGTQQGDILPNADGTWYLRVTLDVAAGEASGLSCRVKHSSLGGQDIILYWEQHSSVGWILLAVIVPLVLLTGLAFWHRKHWKHCDPSSALHRLE.

A signal peptide spans 1–18 (MLFLQLPLLLVLLPGGDS). Over 19–300 (EEGFQEPISF…IILYWEQHSS (282 aa)) the chain is Extracellular. 2 N-linked (GlcNAc...) asparagine glycosylation sites follow: N38 and N75. A D-galactosylceramide is bound at residue 91-95 (FFVRF). Cystine bridges form between C120-C184 and C224-C279. A glycan (N-linked (GlcNAc...) asparagine) is linked at N146. Residues 185–295 (PRFVLGLLDA…LGGQDIILYW (111 aa)) form the Ig-like domain. The helical transmembrane segment at 301-321 (VGWILLAVIVPLVLLTGLAFW) threads the bilayer. At 322–339 (HRKHWKHCDPSSALHRLE) the chain is on the cytoplasmic side.

Heterodimer with B2M (beta-2-microglobulin). Interacts with CD74.

It is found in the cell membrane. Its subcellular location is the membrane raft. The protein resides in the endosome membrane. Antigen-presenting protein that binds self and non-self lipid and glycolipid antigens and presents them to T-cell receptors on natural killer T-cells. This Sus scrofa (Pig) protein is T-cell surface glycoprotein CD1a (CD1A).